The following is a 265-amino-acid chain: Probable ribose-5-phosphate isomerase 2 (265 aa).

A2 carries the post-translational modification N-acetylalanine. A Phosphoserine modification is found at S96.

Belongs to the ribose 5-phosphate isomerase family.

It is found in the cytoplasm. It carries out the reaction aldehydo-D-ribose 5-phosphate = D-ribulose 5-phosphate. Its pathway is carbohydrate degradation; pentose phosphate pathway; D-ribose 5-phosphate from D-ribulose 5-phosphate (non-oxidative stage): step 1/1. In terms of biological role, catalyzes the reversible conversion of ribose-5-phosphate to ribulose 5-phosphate. This chain is Probable ribose-5-phosphate isomerase 2 (RPI2), found in Arabidopsis thaliana (Mouse-ear cress).